We begin with the raw amino-acid sequence, 476 residues long: BTB/POZ domain-containing protein KCTD8 (476 aa).

Residues 44 to 122 form the BTB domain; it reads EVVELNVGGQ…LRDKQLALPE (79 aa). The residue at position 78 (Ser-78) is a Phosphoserine. Arg-80 carries the omega-N-methylarginine modification. The disordered stretch occupies residues 331-412; sequence SPKQEHEDRK…WMPPPDKRRN (82 aa). Basic and acidic residues predominate over residues 333–349; it reads KQEHEDRKRDKVTDKGS. Residues 350–391 are compositionally biased toward polar residues; sequence ESGTSCNELSTSSCDSHSEASTPQDNPANTQQAAAHQPNTLT. Phosphoserine is present on Ser-413.

In terms of assembly, interacts as a tetramer with GABBR1 and GABBR2.

It is found in the presynaptic cell membrane. Its subcellular location is the postsynaptic cell membrane. Functionally, auxiliary subunit of GABA-B receptors that determine the pharmacology and kinetics of the receptor response. Increases agonist potency and markedly alter the G-protein signaling of the receptors by accelerating onset and promoting desensitization. This chain is BTB/POZ domain-containing protein KCTD8 (Kctd8), found in Mus musculus (Mouse).